Here is a 287-residue protein sequence, read N- to C-terminus: MINALIINYPWFMYLVVGLFSLAVGSLLNVIIYRLPIILQEEWKEQCCELFHFEQRKEKIKLNLFLPRSFCPHCKAMVKAWQNIPLLAILVLRGRCYQCDSPFSIRYPFVETLTTVLSLYASWHFGFTIQLLFALLAIWILISLVFIDLDHQLLPDSLTLGLLWIGLIANTQNVFVSLDVAVLSCAGAYLALWLFINLFYLMTCKVCMGHGDFKLFAAFGAWLGWMYLPIILLISSITGAIIGLIYLKINGKSRDTAIPFGPFLCISGLIAMFWGDSIINWYIGYWM.

The helical transmembrane segment at 12 to 32 (FMYLVVGLFSLAVGSLLNVII) threads the bilayer. Cysteine 71, cysteine 74, cysteine 96, and cysteine 99 together coordinate Zn(2+). 5 consecutive transmembrane segments (helical) span residues 127 to 147 (FTIQ…LVFI), 158 to 178 (LTLG…FVSL), 182 to 202 (VLSC…FYLM), 215 to 235 (LFAA…LLIS), and 259 to 279 (PFGP…DSII).

Belongs to the peptidase A24 family. It depends on Zn(2+) as a cofactor.

It localises to the cell inner membrane. It carries out the reaction Typically cleaves a -Gly-|-Phe- bond to release an N-terminal, basic peptide of 5-8 residues from type IV prepilin, and then N-methylates the new N-terminal amino group, the methyl donor being S-adenosyl-L-methionine.. Functionally, plays an essential role in type IV pili and type II pseudopili formation by proteolytically removing the leader sequence from substrate proteins and subsequently monomethylating the alpha-amino group of the newly exposed N-terminal phenylalanine. The chain is Prepilin leader peptidase/N-methyltransferase (pilD) from Legionella pneumophila.